The chain runs to 161 residues: tRNA-specific adenosine deaminase (161 aa).

Residues 2 to 120 (TQDELYMKEA…GTLMNLLQEE (119 aa)) form the CMP/dCMP-type deaminase domain. Residue His-53 participates in Zn(2+) binding. The active-site Proton donor is Glu-55. Cys-83 and Cys-86 together coordinate Zn(2+).

Belongs to the cytidine and deoxycytidylate deaminase family. As to quaternary structure, homodimer. It depends on Zn(2+) as a cofactor.

It carries out the reaction adenosine(34) in tRNA + H2O + H(+) = inosine(34) in tRNA + NH4(+). Catalyzes the deamination of adenosine to inosine at the wobble position 34 of tRNA(Arg2). This is tRNA-specific adenosine deaminase from Bacillus subtilis (strain 168).